The following is a 594-amino-acid chain: CDPK-related kinase 4 (594 aa).

The interval 1–131 (MGHCYSRNIS…DSGGGERLDK (131 aa)) is disordered. Glycine 2 carries the N-myristoyl glycine lipid modification. Over residues 37–58 (IPQSPVASGTPEVNSYNISPFQ) the composition is skewed to polar residues. Basic and acidic residues predominate over residues 116–131 (VVDHGGDSGGGERLDK). In terms of domain architecture, Protein kinase spans 143–405 (YELGKEVGRG…AAQALAHPWL (263 aa)). Residues 149–157 (VGRGHFGHT) and lysine 175 contribute to the ATP site. The Proton acceptor role is filled by aspartate 271. A Phosphoserine modification is found at serine 311. The autoinhibitory domain stretch occupies residues 409–439 (NPGLLLDFSVYKLVKSYIRASPFRRSALKAL). The calmodulin binding (CaMBD) stretch occupies residues 428–448 (ASPFRRSALKALSKAIPDEEL). EF-hand domains are found at residues 446 to 481 (EELV…ATDA), 482 to 517 (MMES…VYQL), 518 to 557 (EALE…GPSA), and 558 to 587 (YPLL…VTVR). Positions 462, 501, 506, 539, 546, 567, 569, and 571 each coordinate Ca(2+). The residue at position 573 (serine 573) is a Phosphoserine.

The protein belongs to the protein kinase superfamily. Ser/Thr protein kinase family. CDPK subfamily. Binds calmodulin (CaM) in a calcium-dependent manner. Autophosphorylated.

It is found in the cell membrane. It carries out the reaction L-seryl-[protein] + ATP = O-phospho-L-seryl-[protein] + ADP + H(+). The enzyme catalyses L-threonyl-[protein] + ATP = O-phospho-L-threonyl-[protein] + ADP + H(+). With respect to regulation, activated by calcium and calmodulin. Autophosphorylation may play an important role in the regulation of the kinase activity. May play a role in signal transduction pathways that involve calcium as a second messenger. The chain is CDPK-related kinase 4 (CRK4) from Arabidopsis thaliana (Mouse-ear cress).